Consider the following 553-residue polypeptide: Transcription factor 7-like 1 (553 aa).

Positions 1–11 (MPQLNSGGGDE) are enriched in gly residues. The interval 1 to 61 (MPQLNSGGGD…SENHSSDSDS (61 aa)) is interaction with CTNNB1. 3 disordered regions span residues 1–77 (MPQL…EKPR), 183–213 (GTPP…PYYP), and 392–474 (SARD…LTTK). 2 stretches are compositionally biased toward basic and acidic residues: residues 17-32 (ELIR…EKSP) and 52-77 (SENH…EKPR). The tract at residues 109–312 (LGGHYLPNGA…SPNLITKPSV (204 aa)) is interaction with AES and TLE4. The segment at residues 324–392 (IKKPLNAFML…LHSQLYPTWS (69 aa)) is a DNA-binding region (HMG box). Positions 407-416 (KQSPEMEITK) are enriched in basic and acidic residues. The interaction with CTBP stretch occupies residues 408 to 553 (QSPEMEITKT…PLSLVTKSSD (146 aa)). Positions 444-463 (SPATPSAALASPAAPAATHS) are enriched in low complexity. A compositionally biased stretch (polar residues) spans 464-473 (EQAQPLSLTT).

It belongs to the TCF/LEF family. Interacts with csnk1e, ctnnb1, ctbp, dact1 and gsk3b. May interact with ase and tle4. Phosphorylated. Phosphorylation by csnk1e promotes binding to ctnnb1 while phosphorylation by gsk3b may reverse this effect.

It is found in the nucleus. Functionally, participates in the Wnt signaling pathway. Binds to DNA and acts as a repressor in the absence of ctnnb1, and as an activator in its presence. Required early in development for the establishment of the dorsal body axis in response to maternal Wnt signaling. This chain is Transcription factor 7-like 1 (tcf7l1), found in Xenopus tropicalis (Western clawed frog).